The following is a 324-amino-acid chain: tRNA dimethylallyltransferase (324 aa).

17–24 (GPTASGKT) is an ATP binding site. 19–24 (TASGKT) lines the substrate pocket. Interaction with substrate tRNA stretches follow at residues 42–45 (DSAL), 166–170 (QRIQR), and 251–256 (RCVGYR).

It belongs to the IPP transferase family. Monomer. Mg(2+) serves as cofactor.

The enzyme catalyses adenosine(37) in tRNA + dimethylallyl diphosphate = N(6)-dimethylallyladenosine(37) in tRNA + diphosphate. Its function is as follows. Catalyzes the transfer of a dimethylallyl group onto the adenine at position 37 in tRNAs that read codons beginning with uridine, leading to the formation of N6-(dimethylallyl)adenosine (i(6)A). The chain is tRNA dimethylallyltransferase from Burkholderia pseudomallei (strain 1106a).